The sequence spans 385 residues: Ethanolamine kinase 2 (385 aa).

It belongs to the choline/ethanolamine kinase family.

It carries out the reaction ethanolamine + ATP = phosphoethanolamine + ADP + H(+). It participates in phospholipid metabolism; phosphatidylethanolamine biosynthesis; phosphatidylethanolamine from ethanolamine: step 1/3. In terms of biological role, highly specific for ethanolamine phosphorylation. Does not have choline kinase activity. In Rattus norvegicus (Rat), this protein is Ethanolamine kinase 2 (Etnk2).